Here is a 59-residue protein sequence, read N- to C-terminus: Large ribosomal subunit protein uL30 (59 aa).

The protein belongs to the universal ribosomal protein uL30 family. Part of the 50S ribosomal subunit.

The sequence is that of Large ribosomal subunit protein uL30 from Mycolicibacterium vanbaalenii (strain DSM 7251 / JCM 13017 / BCRC 16820 / KCTC 9966 / NRRL B-24157 / PYR-1) (Mycobacterium vanbaalenii).